A 146-amino-acid polypeptide reads, in one-letter code: Hemoglobin subunit beta (146 aa).

The Globin domain occupies 2-146 (HWSAEEKQLI…VAHALARKYH (145 aa)). Heme b is bound by residues His63 and His92.

Belongs to the globin family. As to quaternary structure, heterotetramer of two alpha chains and two beta chains. In terms of tissue distribution, red blood cells.

Involved in oxygen transport from the lung to the various peripheral tissues. This Anseranas semipalmata (Magpie goose) protein is Hemoglobin subunit beta (HBB).